Reading from the N-terminus, the 149-residue chain is MRCPFCQSDDTKVLDTRLIDDGSQVRRRRECVSCGERYSTRETVDLNLPHLIKSDDSREAFSEDKLRSGLLKALEKRPVKTSQIETSIARIELKLMTQADREVSCIKIGEWVMEELKALDKVAYIRFMSVYRQFQDIEAFKKEIDRLMR.

The segment at 3 to 34 is a zinc-finger region; the sequence is CPFCQSDDTKVLDTRLIDDGSQVRRRRECVSC. The ATP-cone domain maps to 49–139; it reads PHLIKSDDSR…VYRQFQDIEA (91 aa).

Belongs to the NrdR family. Zn(2+) is required as a cofactor.

Its function is as follows. Negatively regulates transcription of bacterial ribonucleotide reductase nrd genes and operons by binding to NrdR-boxes. The chain is Transcriptional repressor NrdR from Ruthia magnifica subsp. Calyptogena magnifica.